Here is a 458-residue protein sequence, read N- to C-terminus: Light-independent protochlorophyllide reductase subunit N (458 aa).

3 residues coordinate [4Fe-4S] cluster: C22, C47, and C107.

It belongs to the BchN/ChlN family. As to quaternary structure, protochlorophyllide reductase is composed of three subunits; ChlL, ChlN and ChlB. Forms a heterotetramer of two ChlB and two ChlN subunits. The cofactor is [4Fe-4S] cluster.

It is found in the plastid. The protein resides in the chloroplast. It carries out the reaction chlorophyllide a + oxidized 2[4Fe-4S]-[ferredoxin] + 2 ADP + 2 phosphate = protochlorophyllide a + reduced 2[4Fe-4S]-[ferredoxin] + 2 ATP + 2 H2O. The protein operates within porphyrin-containing compound metabolism; chlorophyll biosynthesis (light-independent). Functionally, component of the dark-operative protochlorophyllide reductase (DPOR) that uses Mg-ATP and reduced ferredoxin to reduce ring D of protochlorophyllide (Pchlide) to form chlorophyllide a (Chlide). This reaction is light-independent. The NB-protein (ChlN-ChlB) is the catalytic component of the complex. This Chaetosphaeridium globosum (Charophycean green alga) protein is Light-independent protochlorophyllide reductase subunit N.